The sequence spans 692 residues: Eomesodermin (692 aa).

The tract at residues 35–135 (NSSTPNLPHT…LNTAVPTSAP (101 aa)) is disordered. The T-box DNA-binding region spans 263–443 (LWLKFHRHQT…HNPFAKGFRD (181 aa)). Residues 578–692 (SMAGWGSRGS…LGYYSFYSSS (115 aa)) form a required for transcription activation region. Disordered regions lie at residues 595–614 (TSLP…DLLP) and 621–673 (EMSS…DIGT). Composition is skewed to low complexity over residues 596–609 (SLPW…SGFS) and 654–665 (SPSTSSNENSPP).

Its subcellular location is the nucleus. Functions as a transcriptional activator playing a crucial role during development. Functions in gastrulation, regulating mesoderm differentiation. Activates wnt8, t/bra, chrd and mix-A/mix.1 expression. This is Eomesodermin (eomes) from Xenopus laevis (African clawed frog).